A 293-amino-acid polypeptide reads, in one-letter code: Microtubule-associated protein RP/EB family member 1B (293 aa).

Positions 13-115 (FVGRNEILSW…FLQWLKRFCD (103 aa)) constitute a Calponin-homology (CH) domain. Disordered regions lie at residues 124–188 (ENYN…SAEV) and 262–293 (LGLE…ETQT). The span at 129–141 (VERRSRGGREKSV) shows a compositional bias: basic and acidic residues. Positions 151–166 (LQTNNMHHPPVATSNK) are enriched in polar residues. An EB1 C-terminal domain is found at 180–250 (GGSNSSAEVQ…LYATDANESV (71 aa)). Residues 266–285 (GYEEEGKEEEEEEEEEEEEA) show a composition bias toward acidic residues.

This sequence belongs to the MAPRE family. Homodimer and heterodimer with EB1A. Highly expressed in guard cells of leaf stomata, pollen grains and pollen tubes. Expressed in young roots.

The protein localises to the cytoplasm. The protein resides in the cytoskeleton. It localises to the spindle pole. Its subcellular location is the phragmoplast. Binds to the plus end of microtubules and regulates the dynamics of the microtubule cytoskeleton. May be involved in anchoring microtubules to their nucleation sites and/or functioning as a reservoir for distribution to the growing end. In plants, microtubule minus ends are not necessarily severed from the nucleation site and transported to the plus end of a microtubule as part of the recycling process. May play a role in endomembrane organization during polarized growth of plant cells. The polypeptide is Microtubule-associated protein RP/EB family member 1B (EB1B) (Arabidopsis thaliana (Mouse-ear cress)).